Here is a 652-residue protein sequence, read N- to C-terminus: DNA mismatch repair protein MutL (652 aa).

Belongs to the DNA mismatch repair MutL/HexB family.

Functionally, this protein is involved in the repair of mismatches in DNA. It is required for dam-dependent methyl-directed DNA mismatch repair. May act as a 'molecular matchmaker', a protein that promotes the formation of a stable complex between two or more DNA-binding proteins in an ATP-dependent manner without itself being part of a final effector complex. The sequence is that of DNA mismatch repair protein MutL from Neorickettsia sennetsu (strain ATCC VR-367 / Miyayama) (Ehrlichia sennetsu).